The chain runs to 349 residues: MSELQPIFDRLYQGQTISREETKALFSEIVEGKMDPVAMAGMLVAMKMRGETIDEISGAADALLQAAKAFPAPSEATRTQGIVDIVGTGGDGHNTINISTTSAFVAAAAGAKVAKHGNRSVSSKSGSSDLLAQFGIDLTMAPETARDCLDDLGLCFLFAPHYHGGVRHAVPVRQALKTRTLFNVLGPLINPARPDYMLLGVYDPMLVRPICDVLKALDVKRAMVVHGSGLDEVAVHGETLVCELKQGEIVEYYLSPEALGLSRAAISDLAGAGPAENAEITRAILQGHGELAHTEAVAANAGCALYVSGCCDSPQQGTALALQTLASGKAYILLQQLASASQSDNLGTN.

5-phospho-alpha-D-ribose 1-diphosphate contacts are provided by residues Gly87, 90-91, Thr95, 97-100, 115-123, and Ser127; these read GD, NIST, and KHGNRSVSS. Gly87 lines the anthranilate pocket. Mg(2+) is bound at residue Ser99. Asn118 contributes to the anthranilate binding site. Arg173 contacts anthranilate. Residues Asp231 and Glu232 each contribute to the Mg(2+) site.

It belongs to the anthranilate phosphoribosyltransferase family. Homodimer. Mg(2+) serves as cofactor.

The enzyme catalyses N-(5-phospho-beta-D-ribosyl)anthranilate + diphosphate = 5-phospho-alpha-D-ribose 1-diphosphate + anthranilate. The protein operates within amino-acid biosynthesis; L-tryptophan biosynthesis; L-tryptophan from chorismate: step 2/5. In terms of biological role, catalyzes the transfer of the phosphoribosyl group of 5-phosphorylribose-1-pyrophosphate (PRPP) to anthranilate to yield N-(5'-phosphoribosyl)-anthranilate (PRA). This chain is Anthranilate phosphoribosyltransferase, found in Shewanella loihica (strain ATCC BAA-1088 / PV-4).